A 361-amino-acid chain; its full sequence is G kinase-anchoring protein 1-A (361 aa).

2 disordered regions span residues 22 to 111 (DSSS…EDWQ) and 140 to 183 (FEES…KDFQ). Residues 35–48 (AHSSGKAHSGSAAR) show a composition bias toward low complexity. Residues 51 to 79 (NKGNEKKKEKRRKKKEQQQSEANELRNLA) adopt a coiled-coil conformation. Positions 158–168 (KVNKKDKRKNN) are enriched in basic residues. 2 coiled-coil regions span residues 246–296 (KDGR…QEGE) and 326–346 (AALE…VKYQ).

The protein belongs to the GKAP1 family.

It localises to the golgi apparatus. Functionally, may play a role in the regulation of insulin-dependent IRS1 tyrosine phosphorylation in adipocytes. The sequence is that of G kinase-anchoring protein 1-A (gkap1-a) from Xenopus laevis (African clawed frog).